Consider the following 418-residue polypeptide: Phosphatidylcholine:ceramide cholinephosphotransferase 1 (418 aa).

Residues 12-75 (WSPKKVADWL…LDMIETLKME (64 aa)) form the SAM domain. A Phosphoserine modification is found at S13. 5 helical membrane-spanning segments follow: residues 141-161 (FLAF…ISVV), 189-209 (FSIC…QWLL), 220-240 (FFCI…VTTL), 281-301 (MCGD…YLFI), and 309-329 (LWWY…CILL). H290 is a catalytic residue. Active-site residues include H333 and D337. A helical membrane pass occupies residues 335–352 (TVDVVVAYYITTRLFWWY).

It belongs to the sphingomyelin synthase family. Widely expressed. Highest expression in the cardiovascular system.

It localises to the golgi apparatus membrane. It catalyses the reaction an N-acylsphing-4-enine + a 1,2-diacyl-sn-glycero-3-phosphocholine = a sphingomyelin + a 1,2-diacyl-sn-glycerol. It carries out the reaction 1-(9Z-octadecenoyl)-2-acyl-sn-3-glycerol + a sphingomyelin = a 1-(9Z-octadecenoyl)-2-acyl-sn-glycero-3-phosphocholine + an N-acylsphing-4-enine. The enzyme catalyses N-hexadecanoylsphinganine + a 1,2-diacyl-sn-glycero-3-phosphocholine = N-hexadecanoyl-sphinganine-1-phosphocholine + a 1,2-diacyl-sn-glycerol. The catalysed reaction is N-hexadecanoyl-(4R)-hydroxysphinganine + a 1,2-diacyl-sn-glycero-3-phosphocholine = N-hexadecanoyl-(4R)-hydroxysphinganine-phosphocholine + a 1,2-diacyl-sn-glycerol. It catalyses the reaction an N-acylsphing-4-enine + a 1,2-diacyl-sn-glycero-3-phosphoethanolamine = an N-acylsphing-4-enine 1-phosphoethanolamine + a 1,2-diacyl-sn-glycerol. The protein operates within sphingolipid metabolism. Major sphingomyelin synthase at the Golgi apparatus. Catalyzes the reversible transfer of phosphocholine moiety in sphingomyelin biosynthesis: in the forward reaction transfers phosphocholine head group of phosphatidylcholine (PC) on to ceramide (CER) to form ceramide phosphocholine (sphingomyelin, SM) and diacylglycerol (DAG) as by-product, and in the reverse reaction transfers phosphocholine from SM to DAG to form PC and CER. The direction of the reaction depends on the levels of CER and DAG in Golgi membranes. Converts the newly synthesized CER, that is transported from the endoplasmic reticulum to the trans-Golgi by the Cer transport protein (CERT), to SM. Can form a heteromeric complex with glucosylceramide synthase (GCS) increasing SMS activity and reducing glucosylceramide synthesis, a critical mechanism that controls the metabolic fate of CER in the Golgi. Does not use free phosphorylcholine or CDP-choline as donor. Can also transfer phosphoethanolamine head group of phosphatidylethanolamine (PE) on to CER to form ceramide phosphoethanolamine (CPE). Regulates receptor-mediated signal transduction via mitogenic DAG and proapoptotic CER, as well as via SM, a structural component of membrane rafts that serve as platforms for signal transduction and protein sorting. Plays a role in secretory transport via regulation of DAG pool at the Golgi apparatus and its downstream effects on PRKD1. The protein is Phosphatidylcholine:ceramide cholinephosphotransferase 1 (SGMS1) of Sus scrofa (Pig).